Here is a 266-residue protein sequence, read N- to C-terminus: Norfluorocurarine synthase 1 (266 aa).

The AB hydrolase-1 domain occupies 11–121 (HFVLVHGAGH…VMPDAVHPPS (111 aa)). Catalysis depends on residues Ser86, Asp216, and His244.

It belongs to the AB hydrolase superfamily. As to quaternary structure, homodimer. As to expression, mainly expressed in roots.

It catalyses the reaction 17-dehydropreakuammicine + H2O = norfluorocurarine + methanol + CO2. Its pathway is alkaloid biosynthesis. In terms of biological role, hydrolase involved in the biosynthesis of curare monoterpene indole alkaloids (MIAs), natural products such as strychnine, a neurotoxic compound used as a pesticide to control rodents, and its pharmacologically active derivatives, including brucine, used to regulate blood pressure. Curare alkaloids act as animal glycine receptor antagonists. Catalyzes the conversion of dehydropreakuammicine to norfluorocurarine. The chain is Norfluorocurarine synthase 1 from Strychnos nux-vomica (Poison nut).